Consider the following 376-residue polypeptide: tRNA-aminoacylation cofactor ARC1 (376 aa).

The tract at residues 22–46 is interaction with methionyl-tRNA synthetase MES1; that stretch reads KEQSAQAAQWESVLKSGQIQPHLDQ. Interaction with glutamyl-tRNA synthetase GUS1 stretches follow at residues 52-61 and 91-121; these read RDNTFIVSTL and TYTT…EINH. The segment at 133-206 is disordered; sequence KKKAPAGGAA…QNKAPEKPKP (74 aa). Basic and acidic residues predominate over residues 146–180; it reads AKADEDVSKKAKKQDHPRGKPDEETLKKLREEAKA. The segment covering 186-199 has biased composition (low complexity); it reads KAANAKQQQEQQNK. Positions 205 to 307 constitute a tRNA-binding domain; that stretch reads KPSAIDFRVG…KDSKAGDKVF (103 aa).

This sequence belongs to the tRNA-aminoacylation cofactor ARC1 family. Component of a yeast aminoacyl-tRNA synthase (aaRS) complex formed by methionyl-tRNA synthase MES1, glutamyl-tRNA synthase GUS1 and the tRNA aminoacylation cofactor ARC1 in a stoichiometric complex. Interacts (via N-ter) with MES1 (via N-ter) and GUS1 (via N-ter). Can also form a stable binary complex with either MES1 or GUS1 that is functional in terms of aminoacylation.

Its subcellular location is the cytoplasm. Functionally, binds to tRNA and functions as a cofactor for the methionyl-tRNA synthetase (MetRS) and glutamyl-tRNA synthetase (GluRS). Forms a complex with MetRS and GluRS and increases their affinity for cognate tRNAs due to the presence of a tRNA binding domain in its middle and C-terminal part. Binds specifically G4 quadruplex nucleic acid structures (these are four-stranded right-handed helices, stabilized by guanine base quartets). Also required for cytoplasmic confinement of the synthetases and tRNA. The sequence is that of tRNA-aminoacylation cofactor ARC1 (ARC1) from Saccharomyces cerevisiae (strain ATCC 204508 / S288c) (Baker's yeast).